The following is a 152-amino-acid chain: Ribonuclease HI (152 aa).

The region spanning 1-142 (MDSKVVIYTD…ADKLAVQGRE (142 aa)) is the RNase H type-1 domain. Asp-10, Glu-48, Asp-70, and Asp-134 together coordinate Mg(2+).

This sequence belongs to the RNase H family. In terms of assembly, monomer. It depends on Mg(2+) as a cofactor.

It localises to the cytoplasm. It catalyses the reaction Endonucleolytic cleavage to 5'-phosphomonoester.. In terms of biological role, endonuclease that specifically degrades the RNA of RNA-DNA hybrids. The sequence is that of Ribonuclease HI from Rickettsia conorii (strain ATCC VR-613 / Malish 7).